Reading from the N-terminus, the 582-residue chain is SHC-transforming protein 2 (582 aa).

2 disordered regions span residues 1–24 (MTQG…APTT) and 47–70 (GPAA…AGPG). Residues 8–20 (RAPPAPPAPPEPE) are compositionally biased toward pro residues. The region spanning 147 to 329 (LGPGVSYVVR…AGPEESAWGD (183 aa)) is the PID domain. Residues 330–486 (EEDSLEHNYY…PTEEQLRQEP (157 aa)) are CH1. Residues Y338, Y339, and Y414 each carry the phosphotyrosine modification. Positions 460–481 (PLEDQWPSPPTRRAPVAPTEEQ) are disordered. One can recognise an SH2 domain in the interval 487 to 578 (WYHGRMSRRA…ESELHLRGVV (92 aa)).

As to quaternary structure, interacts with the Trk receptors in a phosphotyrosine-dependent manner and MEGF12. Once activated, binds to GRB2. Phosphorylated on tyrosines by the Trk receptors. Expressed in brain. Expressed at high level in the hypothalamus and at low level in the caudate nucleus.

Its function is as follows. Signaling adapter that couples activated growth factor receptors to signaling pathway in neurons. Involved in the signal transduction pathways of neurotrophin-activated Trk receptors in cortical neurons. This Homo sapiens (Human) protein is SHC-transforming protein 2 (SHC2).